We begin with the raw amino-acid sequence, 299 residues long: N-carbamoylputrescine amidase (299 aa).

One can recognise a CN hydrolase domain in the interval 10 to 268 (VVVSSLQFAC…EAVLVAQFDL (259 aa)). The active-site Proton acceptor is Glu-49. Lys-122 serves as the catalytic Proton donor. Catalysis depends on Cys-159, which acts as the Nucleophile.

Belongs to the carbon-nitrogen hydrolase superfamily. In terms of assembly, homooctamer (isoform 2). As to expression, expressed in roots, stems, leaves and flowers.

The enzyme catalyses N-carbamoylputrescine + H2O + 2 H(+) = putrescine + NH4(+) + CO2. It participates in amine and polyamine biosynthesis; putrescine biosynthesis via agmatine pathway; putrescine from N-carbamoylputrescine (amidase route): step 1/1. Its function is as follows. Involved in polyamine biosynthesis. Catalyzes the hydrolysis of N-carbamoylputrescine to produce putrescine and ammonia. This Arabidopsis thaliana (Mouse-ear cress) protein is N-carbamoylputrescine amidase.